The sequence spans 294 residues: Mating type protein mtA-1 (294 aa).

A DNA-binding region (alpha box) is located at residues 46–101; it reads TAKKKVNGFMGFRSNYSPLFSYLPQKMRSPFMTILWQYDPYHNEWDFMCSVYSSIR.

Belongs to the MATALPHA1 family.

The protein resides in the nucleus. Its function is as follows. Mating type proteins are sequence specific DNA-binding proteins that act as master switches in fungal differentiation by controlling gene expression in a cell type-specific fashion. Transcriptional activator that induces the transcription of alpha-specific genes. The sequence is that of Mating type protein mtA-1 (MTA1) from Sordaria equina.